Here is a 67-residue protein sequence, read N- to C-terminus: Ayadualin (67 aa).

Positions 1–20 are cleaved as a signal peptide; that stretch reads MNKIILFSAVFLALVFCAEA. A compositionally biased stretch (acidic residues) spans 35–54; the sequence is PDDTVDIDEGLPDAFDEDYE. Residues 35-67 form a disordered region; sequence PDDTVDIDEGLPDAFDEDYEQDGHNPYPCRGDC. An Integrin-binding motif motif is present at residues 64 to 66; that stretch reads RGD.

As to expression, salivary gland.

The protein resides in the secreted. Its function is as follows. Inhibits collagen- and ADP-induced host platelet aggregation by blocking the binding of host integrin alpha-IIb/beta-3 (ITGA2B/ITGB3) to fibrinogen. Inhibits the intrinsic blood coagulation pathway in the host by blocking the activity of host coagulation factor XIIa (F12). This chain is Ayadualin, found in Lutzomyia ayacuchensis (Sand fly).